The chain runs to 653 residues: 4-hydroxy-2,2'-bipyrrole-5-methanol synthase PigH (653 aa).

The region spanning 7-84 is the Carrier domain; the sequence is ETYETLKQSV…DALDGILQRE (78 aa). Ser45 carries the post-translational modification O-(pantetheine 4'-phosphoryl)serine. 354–355 lines the pyridoxal 5'-phosphate pocket; sequence GY. His379 serves as a coordination point for substrate. Ser426, His454, and Thr482 together coordinate pyridoxal 5'-phosphate. Lys485 bears the N6-(pyridoxal phosphate)lysine mark. Residues 512–532 traverse the membrane as a helical segment; sequence VFAATIPAPVAAGVIASIDVM.

Pyridoxal 5'-phosphate serves as cofactor.

The protein resides in the membrane. Its pathway is antibiotic biosynthesis; prodigiosin biosynthesis. In terms of biological role, involved in the biosynthesis of 4-methoxy-2,2'-bipyrrole-5-carbaldehyde (MBC), one of the terminal products involved in the biosynthesis of the red antibiotic prodigiosin (Pig). Carrier of the L-malonyl group (malonyl-S-PigH), which is decarboxylated by PigJ to yield a C2 carbanion acetyl-S-PigH. Then the pyrrolyl group of pyrrolyl-S-cysteinyl PigJ intermediate is captured by the C2 carbanion acetyl-S-PigH to yield the pyrrolyl-beta-ketoacyl-S-PigH. In the last step, PigH catalyzes the decarboxylative condensation between the pyrrolyl-beta-ketoacyl (pyrrolyl-beta-ketoacyl-S-PigH) and L-serine to yield 4-hydroxy-2,2'-bipyrrole-5-methanol (HBM). The sequence is that of 4-hydroxy-2,2'-bipyrrole-5-methanol synthase PigH from Serratia sp. (strain ATCC 39006) (Prodigiosinella confusarubida).